Here is a 250-residue protein sequence, read N- to C-terminus: Glycerol uptake facilitator protein-like 5 (250 aa).

Transmembrane regions (helical) follow at residues 12-32 (EFFGTLILVLLGNGAVANAFL) and 46-66 (GGWLLVASGYGLGVMLPAMMF). An NPA 1 motif is present at residues 75–77 (NPA). The next 3 membrane-spanning stretches (helical) occupy residues 85 to 105 (IGIFPWAHVAPYLIWQFLGAI), 142 to 162 (LNGFVTEMVGTAVLIFGAMGL), and 172 to 192 (IDIANIGVGLLIAAMVISLGG). An NPA 2 motif is present at residues 199-201 (NPA). Residues 230–250 (VVAPIVGAVIGIWIYKIFFGL) form a helical membrane-spanning segment.

This sequence belongs to the MIP/aquaporin (TC 1.A.8) family.

The protein resides in the cell membrane. Functionally, probable transporter that facilitates the transmembrane diffusion of an unknown substrate. Is not permeable to water, dihydroxyacetone, glycerol, urea, H(2)O(2) and D/L-lactic acid. In Lactiplantibacillus plantarum (strain ATCC BAA-793 / NCIMB 8826 / WCFS1) (Lactobacillus plantarum), this protein is Glycerol uptake facilitator protein-like 5.